A 683-amino-acid polypeptide reads, in one-letter code: Methionine--tRNA ligase (683 aa).

Positions 15–25 (PYANGPIHLGH) match the 'HIGH' region motif. 4 residues coordinate Zn(2+): C146, C149, C159, and C162. The short motif at 332–336 (KMSKS) is the 'KMSKS' region element. K335 is a binding site for ATP. Residues 581–683 (DFCKVDLRVA…AGAKAGQRVK (103 aa)) form the tRNA-binding domain.

It belongs to the class-I aminoacyl-tRNA synthetase family. MetG type 1 subfamily. In terms of assembly, homodimer. Requires Zn(2+) as cofactor.

The protein resides in the cytoplasm. The catalysed reaction is tRNA(Met) + L-methionine + ATP = L-methionyl-tRNA(Met) + AMP + diphosphate. In terms of biological role, is required not only for elongation of protein synthesis but also for the initiation of all mRNA translation through initiator tRNA(fMet) aminoacylation. This is Methionine--tRNA ligase from Histophilus somni (strain 2336) (Haemophilus somnus).